Reading from the N-terminus, the 321-residue chain is uncharacterized protein (321 aa).

The next 9 membrane-spanning stretches (helical) occupy residues 10 to 28, 41 to 63, 94 to 111, 116 to 138, 143 to 165, 200 to 222, 237 to 259, 266 to 283, and 293 to 315; these read LWCSFGVFLIIIIIIEMSI, IALYSSCISMLTAILFDVLIWIY, NVAMWFFLFQLFSISMVH, LFYGTFLALVFRSSIIFFGVWLL, FLFYVLSIILLFTGIITILSNGV, NGVIVATPLFLVLILIELNDIIF, PFIIITSSFFSIIGLRSIYVILA, YIIKYGITLILIFISIKI, and IMLSSFFIVCILVACFIIEKFFF.

The protein belongs to the TerC family.

The protein localises to the cell membrane. This is an uncharacterized protein from Buchnera aphidicola subsp. Baizongia pistaciae (strain Bp).